The chain runs to 491 residues: Spermatogenesis-defective protein 39 homolog (491 aa).

Threonine 21 bears the Phosphothreonine mark. Positions 72–81 (KETAGSSGST) are enriched in polar residues. The tract at residues 72 to 101 (KETAGSSGSTPEGREQLKGRNSFYTQLPKP) is disordered. Residue threonine 115 is modified to Phosphothreonine. Serine 119, serine 122, and serine 128 each carry phosphoserine. Positions 121-141 (QSLSDALSDTPAKSYAPELGR) are disordered. Residue threonine 130 is modified to Phosphothreonine.

It belongs to the SPE39 family. Interacts with VPS33B. Associates with the homotypic fusion and vacuole protein sorting (HOPS) complex; impaired by VPS33B. Interacts with RAB11A.

It localises to the cytoplasm. The protein resides in the cytoplasmic vesicle. It is found in the early endosome. Its subcellular location is the recycling endosome. The protein localises to the late endosome. In terms of biological role, proposed to be involved in endosomal maturation implicating in part VPS33B. In epithelial cells, the VPS33B:VIPAS39 complex may play a role in the apical RAB11A-dependent recycling pathway and in the maintenance of the apical-basolateral polarity. May play a role in lysosomal trafficking, probably via association with the core HOPS complex in a discrete population of endosomes; the functions seems to be independent of VPS33B. May play a role in vesicular trafficking during spermatogenesis. May be involved in direct or indirect transcriptional regulation of E-cadherin. This Mus musculus (Mouse) protein is Spermatogenesis-defective protein 39 homolog (Vipas39).